The sequence spans 130 residues: Granulin (130 aa).

Residues 1 to 26 (MNYSKIFIFGIISLILMALFSSTVES) form the signal peptide. 2 disulfide bridges follow: Cys67-Cys79 and Cys73-Cys89.

It belongs to the granulin family. In terms of processing, granulins are disulfide bridged.

It localises to the secreted. The polypeptide is Granulin (grn) (Dictyostelium discoideum (Social amoeba)).